The primary structure comprises 845 residues: Ribonucleoside-diphosphate reductase subunit alpha (845 aa).

Residues 1–98 (MHIIKRNGEP…LYRDDRTKKR (98 aa)) enclose the ATP-cone domain. Substrate contacts are provided by residues Thr303, 318–319 (SC), Gly347, 534–538 (NLCTE), and 725–729 (PTSST). Cys319 and Cys574 are disulfide-bonded. The Proton acceptor role is filled by Asn534. Cys536 serves as the catalytic Cysteine radical intermediate. Catalysis depends on Glu538, which acts as the Proton acceptor.

This sequence belongs to the ribonucleoside diphosphate reductase large chain family. As to quaternary structure, tetramer of two alpha and two beta subunits.

The catalysed reaction is a 2'-deoxyribonucleoside 5'-diphosphate + [thioredoxin]-disulfide + H2O = a ribonucleoside 5'-diphosphate + [thioredoxin]-dithiol. Under complex allosteric control mediated by deoxynucleoside triphosphates and ATP binding. The type of nucleotide bound at the specificity site determines substrate preference. It seems probable that ATP makes the enzyme reduce CDP and UDP, dGTP favors ADP reduction and dTTP favors GDP reduction. Functionally, provides the precursors necessary for DNA synthesis. Catalyzes the biosynthesis of deoxyribonucleotides from the corresponding ribonucleotides. The sequence is that of Ribonucleoside-diphosphate reductase subunit alpha (nrdA) from Treponema pallidum (strain Nichols).